The chain runs to 167 residues: NADH-quinone oxidoreductase subunit B (167 aa).

The [4Fe-4S] cluster site is built by Cys-48, Cys-49, Cys-113, and Cys-143.

The protein belongs to the complex I 20 kDa subunit family. As to quaternary structure, NDH-1 is composed of 14 different subunits. Subunits NuoB, C, D, E, F, and G constitute the peripheral sector of the complex. [4Fe-4S] cluster is required as a cofactor.

The protein resides in the cell membrane. The enzyme catalyses a quinone + NADH + 5 H(+)(in) = a quinol + NAD(+) + 4 H(+)(out). Functionally, NDH-1 shuttles electrons from NADH, via FMN and iron-sulfur (Fe-S) centers, to quinones in the respiratory chain. Couples the redox reaction to proton translocation (for every two electrons transferred, four hydrogen ions are translocated across the cytoplasmic membrane), and thus conserves the redox energy in a proton gradient. In Wolbachia pipientis subsp. Culex pipiens (strain wPip), this protein is NADH-quinone oxidoreductase subunit B.